Here is a 421-residue protein sequence, read N- to C-terminus: Phosphatidylinositol 5-phosphate 4-kinase type-2 gamma (421 aa).

Position 2 is an N-acetylalanine (Ala-2). The residue at position 26 (Ser-26) is a Phosphoserine. Positions Ala-43–Phe-420 constitute a PIPK domain. The interval Val-69–Asp-75 is required for interaction with PIP5K1A. Ser-349 carries the post-translational modification Phosphoserine.

In terms of assembly, interacts with PIP5K1A; the interaction inhibits PIP5K1A kinase activity. Phosphorylated, phosphorylation is induced by EGF.

Its subcellular location is the endoplasmic reticulum. It is found in the cytoplasm. The catalysed reaction is a 1,2-diacyl-sn-glycero-3-phospho-(1D-myo-inositol-5-phosphate) + ATP = a 1,2-diacyl-sn-glycero-3-phospho-(1D-myo-inositol-4,5-bisphosphate) + ADP + H(+). It catalyses the reaction 1,2-dihexadecanoyl-sn-glycero-3-phospho-(1D-myo-inositol-5-phosphate) + ATP = 1,2-dihexadecanoyl-sn-glycero-3-phospho-(1D-myo-inositol-4,5-bisphosphate) + ADP + H(+). The enzyme catalyses 1,2-dihexadecanoyl-sn-glycero-3-phospho-(1D-myo-inositol-5-phosphate) + GTP = 1,2-dihexadecanoyl-sn-glycero-3-phospho-(1D-myo-inositol-4,5-bisphosphate) + GDP + H(+). In terms of biological role, phosphatidylinositol 5-phosphate 4-kinase with low enzymatic activity. May be a GTP sensor, has higher GTP-dependent kinase activity than ATP-dependent kinase activity. PIP4Ks negatively regulate insulin signaling through a catalytic-independent mechanism. They interact with PIP5Ks and suppress PIP5K-mediated PtdIns(4,5)P2 synthesis and insulin-dependent conversion to PtdIns(3,4,5)P3. The sequence is that of Phosphatidylinositol 5-phosphate 4-kinase type-2 gamma from Homo sapiens (Human).